A 156-amino-acid polypeptide reads, in one-letter code: Small ribosomal subunit protein uS7 (156 aa).

The protein belongs to the universal ribosomal protein uS7 family. As to quaternary structure, part of the 30S ribosomal subunit. Contacts proteins S9 and S11.

One of the primary rRNA binding proteins, it binds directly to 16S rRNA where it nucleates assembly of the head domain of the 30S subunit. Is located at the subunit interface close to the decoding center, probably blocks exit of the E-site tRNA. The polypeptide is Small ribosomal subunit protein uS7 (Streptococcus suis (strain 98HAH33)).